Consider the following 509-residue polypeptide: Major envelope glycoprotein (509 aa).

An N-terminal signal peptide occupies residues 1 to 17 (MVRTAVLILLLVRFSEP). N-linked (GlcNAc...) asparagine; by host glycans are attached at residues asparagine 34, asparagine 156, asparagine 194, asparagine 351, asparagine 381, and asparagine 423. Serine 479 carries the O-palmitoyl serine; by host lipid modification. A helical membrane pass occupies residues 480–502 (FMLGHAFSFMLTVGVIIFLFCMV). Asparagine 504 is a glycosylation site (N-linked (GlcNAc...) asparagine; by host).

It belongs to the baculoviridae gp64 family. In terms of processing, palmitoylated.

The protein resides in the virion membrane. Its subcellular location is the host cell membrane. Envelope phosphoglycoprotein which mediates the fusion of viral and host endosomal membranes leading to virus entry into the host cell. The protein is Major envelope glycoprotein (GP67) of Choristoneura fumiferana nuclear polyhedrosis virus (CfMNPV).